The primary structure comprises 383 residues: Beta-1,3-galactosyltransferase 4 (383 aa).

The Cytoplasmic segment spans residues 1–8 (MPLSLFRR). A helical transmembrane segment spans residues 9–29 (LLLAALLLVIIWTLFGPSGIG). Residues 30–383 (EELLSLSLAS…RCRVIAWLHS (354 aa)) are Lumenal-facing. Asn-149 carries N-linked (GlcNAc...) asparagine glycosylation.

It belongs to the glycosyltransferase 31 family.

It is found in the golgi apparatus membrane. It catalyses the reaction a ganglioside GM2 (d18:1(4E)) + UDP-alpha-D-galactose = a ganglioside GM1 (d18:1(4E)) + UDP + H(+). The catalysed reaction is a ganglioside GM2 + UDP-alpha-D-galactose = a ganglioside GM1 + UDP + H(+). The enzyme catalyses a ganglioside GD2 (d18:1(4E)) + UDP-alpha-D-galactose = a ganglioside GD1b (d18:1(4E)) + UDP + H(+). It carries out the reaction a ganglioside GA2 (d18:1(4E)) + UDP-alpha-D-galactose = a ganglioside GA1 (d18:1(4E)) + UDP + H(+). It functions in the pathway protein modification; protein glycosylation. In terms of biological role, involved in GM1/GD1B/GA1 ganglioside biosynthesis. This is Beta-1,3-galactosyltransferase 4 (B3GALT4) from Canis lupus familiaris (Dog).